The sequence spans 341 residues: Transcription factor JunD (341 aa).

Residues 21 to 49 (VAGAAGAPGGGGFAPPGRAFPGAPPTSSM) form a disordered region. The Menin-binding motif (MBM) signature appears at 35–47 (PPGRAFPGAPPTS). Positions 51–60 (KKDALTLSLA) match the MAP kinase docking motif; essential for its phosphorylation motif. Residues 65-85 (AGLKPGSATAPSALRPDGAPD) form a disordered region. Position 90 is a phosphoserine (Ser90). Residue Ser100 is modified to Phosphoserine; by MAPK8. Thr117 carries the phosphothreonine modification. The segment at 155–176 (AATAATSGAPAPPAPADLAATP) is disordered. 3 positions are modified to phosphoserine: Ser245, Ser249, and Ser253. The interval 262–289 (RIKAERKRLRNRIAASKCRKRKLERISR) is basic motif. The region spanning 262-325 (RIKAERKRLR…AQLKQKVLSH (64 aa)) is the bZIP domain. The tract at residues 290–318 (LEEKVKTLKSQNTELASTASLLREQVAQL) is leucine-zipper.

Belongs to the bZIP family. Jun subfamily. Heterodimer; binds DNA as a heterodimer. Component of an AP-1 transcription factor complex composed of JUN-FOS heterodimers. As part of the AP-1 transcription factor complex, forms heterodimers with FOS proteins, thereby binding to the AP-1 consensus sequence and stimulating transcription. Forms heterodimers with FOSB; thereby binding to the AP-1 consensus sequence. Interacts (via MBM motif) with MEN1; this interaction represses transcriptional activation. Interacts with MAPK10; this interaction is inhibited in the presence of MEN1. Post-translationally, phosphorylated by MAP kinases MAPK8 and MAPK10; phosphorylation is inhibited in the presence of MEN1.

Its subcellular location is the nucleus. Transcription factor binding AP-1 sites. Heterodimerizes with proteins of the FOS family to form an AP-1 transcription factor complex, thereby enhancing their DNA binding activity to an AP-1 consensus sequence 3'-TGA[GC]TCA-5' and enhancing their transcriptional activity. The polypeptide is Transcription factor JunD (Jund) (Rattus norvegicus (Rat)).